A 137-amino-acid chain; its full sequence is 1,4-dihydroxy-2-naphthoyl-CoA hydrolase (137 aa).

Aspartate 13 is an active-site residue.

This sequence belongs to the 4-hydroxybenzoyl-CoA thioesterase family. DHNA-CoA hydrolase subfamily.

It carries out the reaction 1,4-dihydroxy-2-naphthoyl-CoA + H2O = 1,4-dihydroxy-2-naphthoate + CoA + H(+). The protein operates within cofactor biosynthesis; phylloquinone biosynthesis. Its pathway is quinol/quinone metabolism; 1,4-dihydroxy-2-naphthoate biosynthesis; 1,4-dihydroxy-2-naphthoate from chorismate: step 7/7. Catalyzes the hydrolysis of 1,4-dihydroxy-2-naphthoyl-CoA (DHNA-CoA) to 1,4-dihydroxy-2-naphthoate (DHNA), a reaction involved in phylloquinone (vitamin K1) biosynthesis. This is 1,4-dihydroxy-2-naphthoyl-CoA hydrolase from Crocosphaera subtropica (strain ATCC 51142 / BH68) (Cyanothece sp. (strain ATCC 51142)).